A 364-amino-acid chain; its full sequence is MKRTPLFEKHVELGAKMVDFAGWEMPLYYTSIFEEVMAVRKSVGMFDVSHMGEFLVKGPEAVSFIDFLITNDFSSLPDGKAIYSVMCNENGGIIDDLVVYKVSPDEALMVVNAANIEKDFNWIKSHSKNFDVEVSNISDTTALIAFQGPKAQETLQELVEDGLEEIAYYSFRKSIVAGVETLVSRTGYTGEDGFELMLEAKNAPKVWDALMNLLRKIDGRPAGLGARDVCRLEATYLLYGQDMDENTNPFEVGLSWVVKLNKDFVGKEALLKAKEKVERKLVALELSGKRIARKGYEVLKNGERVGEITSGNFSPTLGKSIALALVSKSVKIGDQLGVVFPGGKLVEALVVKKPFYRGSVRREV.

It belongs to the GcvT family. As to quaternary structure, the glycine cleavage system is composed of four proteins: P, T, L and H.

It carries out the reaction N(6)-[(R)-S(8)-aminomethyldihydrolipoyl]-L-lysyl-[protein] + (6S)-5,6,7,8-tetrahydrofolate = N(6)-[(R)-dihydrolipoyl]-L-lysyl-[protein] + (6R)-5,10-methylene-5,6,7,8-tetrahydrofolate + NH4(+). Functionally, the glycine cleavage system catalyzes the degradation of glycine. This Thermotoga maritima (strain ATCC 43589 / DSM 3109 / JCM 10099 / NBRC 100826 / MSB8) protein is Aminomethyltransferase.